The chain runs to 111 residues: Fertilization-influencing membrane protein (111 aa).

An N-terminal signal peptide occupies residues 1-23 (MKLWLWVAVGVWMLMAELGTIET). A helical membrane pass occupies residues 85-105 (ILVGTLVVAFFFLLFQFCLHV).

In terms of tissue distribution, testis-specific.

Its subcellular location is the cell membrane. It is found in the secreted. Plays a role in sperm-oocyte fusion process during fertilization. The protein is Fertilization-influencing membrane protein of Mus musculus (Mouse).